The following is a 356-amino-acid chain: Putative KilA-N domain-containing protein R878 (356 aa).

Residues M1–K12 show a composition bias toward basic residues. Positions M1–Y114 are disordered. Over residues S14–K46 the composition is skewed to low complexity. Positions S66–Y114 are enriched in acidic residues. One can recognise a KilA-N domain in the interval N130–W239.

The polypeptide is Putative KilA-N domain-containing protein R878 (Acanthamoeba polyphaga (Amoeba)).